The primary structure comprises 506 residues: MEEFKRDLELDRSQQHDFIYPLIFQEYIYALAHDRGLNRSIVLENPGYDNKSSLLIVKRLIIHLITQMYQQNHFLFSANDSNKKKIVGYNTNFYSQMIFXGFAVVVEIPFSLXLLSSLEGKEIVKSQNFQSXXXXXXXXXXXXXXXXXXXXXXXXXXXXXXXXXXXXXXXXXXXXXXXXLRFFLHAYHNWNSLMTQKKSSFSFSKKNKRLFLFLYNFHVCEYESIFVFLRNQSSHLRSISSETFLERIYFYRKIELXVFTKDFKAILWVFKXPFLHYVRYQGKSTLASKGTSLLMNKWKYYLVKFWQCYFYMWSQPRRIHINQLSNDSLDFLGYLSSVRLNPLMVRSQMLKNAFLIGNAFXKFDTLVPIIPMIGSLSKAKFGNVLGHPMNXSVWADLSNPDIMDRFXRXFRNLSHYHSGSLKKMSLYRVKYILRLSCARTLARKHKSTVRAFLKRLGVGLLEEFFTEEEQVFYLTFPKASSSSGELYRRRIWYLDIICINELANHS.

The protein belongs to the intron maturase 2 family. MatK subfamily.

It localises to the plastid. The protein localises to the chloroplast. In terms of biological role, usually encoded in the trnK tRNA gene intron. Probably assists in splicing its own and other chloroplast group II introns. This chain is Maturase K, found in Arctostaphylos uva-ursi (Bearberry).